We begin with the raw amino-acid sequence, 824 residues long: Glycerol-3-phosphate acyltransferase (824 aa).

Positions 302 to 307 (CHRSHM) match the HXXXXD motif motif.

The protein belongs to the GPAT/DAPAT family.

Its subcellular location is the cell inner membrane. The catalysed reaction is sn-glycerol 3-phosphate + an acyl-CoA = a 1-acyl-sn-glycero-3-phosphate + CoA. It functions in the pathway phospholipid metabolism; CDP-diacylglycerol biosynthesis; CDP-diacylglycerol from sn-glycerol 3-phosphate: step 1/3. The protein is Glycerol-3-phosphate acyltransferase of Actinobacillus pleuropneumoniae serotype 7 (strain AP76).